Here is a 240-residue protein sequence, read N- to C-terminus: Zein-alpha 19C1 (240 aa).

Positions 1–21 are cleaved as a signal peptide; that stretch reads MATKIFSLLMLLALSACVANA.

This sequence belongs to the zein family.

Zeins are major seed storage proteins. In Zea mays (Maize), this protein is Zein-alpha 19C1.